Reading from the N-terminus, the 38-residue chain is Beta-defensin 8 (38 aa).

Cystine bridges form between Cys7/Cys36, Cys14/Cys29, and Cys19/Cys37.

This sequence belongs to the beta-defensin family. In terms of tissue distribution, neutrophilic granules.

It localises to the secreted. Its function is as follows. Has bactericidal activity. Active against E.coli ML35 and S.aureus 502A. The polypeptide is Beta-defensin 8 (DEFB8) (Bos taurus (Bovine)).